Reading from the N-terminus, the 252-residue chain is Phosphate import ATP-binding protein PstB (252 aa).

The region spanning 6 to 247 is the ABC transporter domain; it reads IEVKNLNTYF…PKNKQTENYI (242 aa). Residue 38–45 coordinates ATP; sequence GPSGCGKS.

Belongs to the ABC transporter superfamily. Phosphate importer (TC 3.A.1.7) family. As to quaternary structure, the complex is composed of two ATP-binding proteins (PstB), two transmembrane proteins (PstC and PstA) and a solute-binding protein (PstS).

It is found in the cell membrane. The catalysed reaction is phosphate(out) + ATP + H2O = ADP + 2 phosphate(in) + H(+). Part of the ABC transporter complex PstSACB involved in phosphate import. Responsible for energy coupling to the transport system. This Methanosphaera stadtmanae (strain ATCC 43021 / DSM 3091 / JCM 11832 / MCB-3) protein is Phosphate import ATP-binding protein PstB.